The sequence spans 213 residues: Pyridoxine/pyridoxamine 5'-phosphate oxidase (213 aa).

Residues 8–11 (RREY) and K67 contribute to the substrate site. Residues 62–67 (RIVLLK), 77–78 (FT), R83, K84, and Q106 contribute to the FMN site. Positions 124, 128, and 132 each coordinate substrate. FMN is bound by residues 141 to 142 (QS) and W186. 192-194 (RLH) serves as a coordination point for substrate. R196 is an FMN binding site.

The protein belongs to the pyridoxamine 5'-phosphate oxidase family. In terms of assembly, homodimer. Requires FMN as cofactor.

It carries out the reaction pyridoxamine 5'-phosphate + O2 + H2O = pyridoxal 5'-phosphate + H2O2 + NH4(+). The enzyme catalyses pyridoxine 5'-phosphate + O2 = pyridoxal 5'-phosphate + H2O2. It participates in cofactor metabolism; pyridoxal 5'-phosphate salvage; pyridoxal 5'-phosphate from pyridoxamine 5'-phosphate: step 1/1. It functions in the pathway cofactor metabolism; pyridoxal 5'-phosphate salvage; pyridoxal 5'-phosphate from pyridoxine 5'-phosphate: step 1/1. Catalyzes the oxidation of either pyridoxine 5'-phosphate (PNP) or pyridoxamine 5'-phosphate (PMP) into pyridoxal 5'-phosphate (PLP). The chain is Pyridoxine/pyridoxamine 5'-phosphate oxidase from Shewanella woodyi (strain ATCC 51908 / MS32).